The following is a 236-amino-acid chain: MGSAESREGRRASFGMDEEERVRVLQGIRLSENVVNRMKEPGQPSRVGLLAPPAAALGPSGGREKDSKPPRPDCGSGRGPPRVQVDPLERCDWEQAVLQDELVRVATTEREAAASPRSVTLRRGEGGVDQEKQRLAQRARELESQEEELRCRDAFYKEQLGRLERQNLEAYRLSSQQFHEAATKIEGAIKPRRVEPVCSGLQAQILRCYRDRLQEVLLCADLVRAYQHCVSSAHKG.

Positions Met1–Arg11 are enriched in basic and acidic residues. The interval Met1 to Val22 is disordered. A lipid anchor (N-myristoyl glycine) is attached at Gly2. 2 positions are modified to phosphoserine: Ser13 and Ser31. 2 disordered regions span residues Val34–Asp86 and Glu109–Lys132. Low complexity predominate over residues Gly48–Gly58. 2 stretches are compositionally biased toward basic and acidic residues: residues Gly62–Arg71 and Arg122–Lys132. The stretch at Gly127–Asn167 forms a coiled coil. In terms of domain architecture, CHCH spans Glu195–Gly236. 2 consecutive short sequence motifs (cx9C motif) follow at residues Cys198 to Cys208 and Cys219 to Cys229. 2 disulfides stabilise this stretch: Cys198-Cys229 and Cys208-Cys219.

The protein belongs to the MICOS complex subunit Mic19 family. Metazoan Mic25 subfamily. In terms of assembly, component of the mitochondrial contact site and cristae organizing system (MICOS) complex, composed of at least MICOS10/MIC10, CHCHD3/MIC19, CHCHD6/MIC25, APOOL/MIC27, IMMT/MIC60, APOO/MIC23/MIC26 and MICOS13/MIC13. This complex was also known under the names MINOS or MitOS complex. The MICOS complex associates with mitochondrial outer membrane proteins SAMM50, MTX1 and MTX2 (together described as components of the mitochondrial outer membrane sorting assembly machinery (SAM) complex) and DNAJC11, mitochondrial inner membrane protein TMEM11 and with HSPA9. The MICOS and SAM complexes together with DNAJC11 are part of a large protein complex spanning both membranes termed the mitochondrial intermembrane space bridging (MIB) complex. Interacts with DISC1. Interacts with IMMT/MIC60.

It localises to the mitochondrion inner membrane. It is found in the mitochondrion. Functionally, component of the MICOS complex, a large protein complex of the mitochondrial inner membrane that plays crucial roles in the maintenance of crista junctions, inner membrane architecture, and formation of contact sites to the outer membrane. In Bos taurus (Bovine), this protein is MICOS complex subunit MIC25 (CHCHD6).